The sequence spans 160 residues: Phosphopantetheine adenylyltransferase (160 aa).

Position 9 (T9) interacts with substrate. ATP is bound by residues 9–10 and H17; that span reads TF. The substrate site is built by K41, L73, and R87. ATP contacts are provided by residues 88 to 90, E98, and 123 to 129; these read GLR and FSYTSSS.

The protein belongs to the bacterial CoaD family. Homohexamer. Requires Mg(2+) as cofactor.

It localises to the cytoplasm. The catalysed reaction is (R)-4'-phosphopantetheine + ATP + H(+) = 3'-dephospho-CoA + diphosphate. It functions in the pathway cofactor biosynthesis; coenzyme A biosynthesis; CoA from (R)-pantothenate: step 4/5. Its function is as follows. Reversibly transfers an adenylyl group from ATP to 4'-phosphopantetheine, yielding dephospho-CoA (dPCoA) and pyrophosphate. This is Phosphopantetheine adenylyltransferase from Opitutus terrae (strain DSM 11246 / JCM 15787 / PB90-1).